The chain runs to 345 residues: Delta(6)-protoilludene synthase (345 aa).

Residues aspartate 84, asparagine 220, serine 224, and glutamate 228 each coordinate Mg(2+). Residues 84–88 (DEYSD) carry the DDXXD motif motif. (2E,6E)-farnesyl diphosphate-binding residues include arginine 309 and tyrosine 310.

The protein belongs to the terpene synthase family. In terms of assembly, monomer. The cofactor is Mg(2+).

The enzyme catalyses (2E,6E)-farnesyl diphosphate = Delta(6)-protoilludene + diphosphate. It functions in the pathway secondary metabolite biosynthesis. Delta(6)-protoilludene synthase, part of the gene cluster that mediates the biosynthesis of melleolides, a range of antifungal and phytotoxic polyketide derivatives composed of an orsellinic acid (OA) moiety esterified to various sesquiterpene alcohols. The first step in melleolides biosynthesis is performed by the delta(6)-protoilludene synthase PRO1 which catalyzes the cyclization of farnesyl diphosphate to protoilludene. The orsellinic acid synthase armB produces OA by condensing acetyl-CoA with 3 malonyl-CoA units in a three-round chain elongation reaction folowed by a C2-C7 ring closure. ArmB further catalyzes the trans-esterification of OA to the various sesquiterpene alcohols resulting from the hydroxylation of protoilludene. The melleolides cluster also includes 5 cytochrome P450 monooxygenases, 4 NAD(+)-dependent oxidoreductases, one flavin-dependent oxidoreductase, and one O-methyltransferase. The cytochrome P450 monooxygenases may be involved in protoilludene hydroxylation to elaborate melleolides with multiple alcohol groups, such as melleolide D, which carries alcohol functionalities at C-4, C-5, C-10, and C-13. The role of the NAD(+)-dependent enzymes remains unknown. Numerous melleolides, including arnamial, show 5'-O-methylation of the aromatic moiety which may be catalyzed by the methyltransferase encoded in the cluster. The flavin-dependent oxidoreductase might represent the dehydrogenase yielding the aldehyde in position 1 of arnamial and other melleolides. Finally, several halogenases, localized outside of the cluster, are able to catalyze the transfer of a single chlorine atom to the melleolide backbone, resulting in a 6'-chloromelleolide product. In Armillaria gallica (Bulbous honey fungus), this protein is Delta(6)-protoilludene synthase.